The following is a 317-amino-acid chain: Methionyl-tRNA formyltransferase (317 aa).

110 to 113 serves as a coordination point for (6S)-5,6,7,8-tetrahydrofolate; that stretch reads SLLP.

Belongs to the Fmt family.

The enzyme catalyses L-methionyl-tRNA(fMet) + (6R)-10-formyltetrahydrofolate = N-formyl-L-methionyl-tRNA(fMet) + (6S)-5,6,7,8-tetrahydrofolate + H(+). Attaches a formyl group to the free amino group of methionyl-tRNA(fMet). The formyl group appears to play a dual role in the initiator identity of N-formylmethionyl-tRNA by promoting its recognition by IF2 and preventing the misappropriation of this tRNA by the elongation apparatus. This chain is Methionyl-tRNA formyltransferase, found in Bacillus subtilis (strain 168).